The sequence spans 557 residues: Formate--tetrahydrofolate ligase (557 aa).

ATP is bound at residue 67–74 (TPAGEGKT).

Belongs to the formate--tetrahydrofolate ligase family.

It carries out the reaction (6S)-5,6,7,8-tetrahydrofolate + formate + ATP = (6R)-10-formyltetrahydrofolate + ADP + phosphate. It participates in one-carbon metabolism; tetrahydrofolate interconversion. In Cereibacter sphaeroides (strain ATCC 17029 / ATH 2.4.9) (Rhodobacter sphaeroides), this protein is Formate--tetrahydrofolate ligase.